The chain runs to 113 residues: CRISPR-associated endoribonuclease Cas2 (113 aa).

Asp-33 contacts Mg(2+).

Belongs to the CRISPR-associated endoribonuclease Cas2 protein family. In terms of assembly, homodimer, forms a heterotetramer with a Cas1 homodimer. It depends on Mg(2+) as a cofactor.

CRISPR (clustered regularly interspaced short palindromic repeat), is an adaptive immune system that provides protection against mobile genetic elements (viruses, transposable elements and conjugative plasmids). CRISPR clusters contain sequences complementary to antecedent mobile elements and target invading nucleic acids. CRISPR clusters are transcribed and processed into CRISPR RNA (crRNA). Functions as a ssRNA-specific endoribonuclease. Involved in the integration of spacer DNA into the CRISPR cassette. The type III-A Csm effector complex binds crRNA and acts as a crRNA-guided RNase, DNase and cyclic oligoadenylate synthase; binding of target RNA cognate to the crRNA is required for all activities. This Mycobacterium tuberculosis (strain CDC 1551 / Oshkosh) protein is CRISPR-associated endoribonuclease Cas2.